A 65-amino-acid chain; its full sequence is Large ribosomal subunit protein bL35 (65 aa).

The disordered stretch occupies residues 1–22; sequence MPKLKTKSGAAKRFKKTGKGGF.

It belongs to the bacterial ribosomal protein bL35 family.

The chain is Large ribosomal subunit protein bL35 from Francisella philomiragia subsp. philomiragia (strain ATCC 25017 / CCUG 19701 / FSC 153 / O#319-036).